A 112-amino-acid polypeptide reads, in one-letter code: uncharacterized protein (112 aa).

Positions 1–29 (MINLHRLCIIHVVATLLSTLLSLISVAIS) are cleaved as a signal peptide. N-linked (GlcNAc...) asparagine glycosylation occurs at Asn-84. The tract at residues 84–112 (NLSKGYNQRPEGSKEESHMVVKEKRKGDH) is disordered. Basic and acidic residues predominate over residues 94–112 (EGSKEESHMVVKEKRKGDH).

The protein resides in the secreted. This is an uncharacterized protein from Homo sapiens (Human).